Consider the following 285-residue polypeptide: Bifunctional protein FolD (285 aa).

Residues 166–168 and Ile-232 contribute to the NADP(+) site; that span reads GAS.

This sequence belongs to the tetrahydrofolate dehydrogenase/cyclohydrolase family. Homodimer.

The catalysed reaction is (6R)-5,10-methylene-5,6,7,8-tetrahydrofolate + NADP(+) = (6R)-5,10-methenyltetrahydrofolate + NADPH. The enzyme catalyses (6R)-5,10-methenyltetrahydrofolate + H2O = (6R)-10-formyltetrahydrofolate + H(+). The protein operates within one-carbon metabolism; tetrahydrofolate interconversion. Functionally, catalyzes the oxidation of 5,10-methylenetetrahydrofolate to 5,10-methenyltetrahydrofolate and then the hydrolysis of 5,10-methenyltetrahydrofolate to 10-formyltetrahydrofolate. The protein is Bifunctional protein FolD of Aliivibrio fischeri (strain MJ11) (Vibrio fischeri).